A 138-amino-acid chain; its full sequence is UPF0201 protein PH1010 (138 aa).

The protein belongs to the UPF0201 family.

The chain is UPF0201 protein PH1010 from Pyrococcus horikoshii (strain ATCC 700860 / DSM 12428 / JCM 9974 / NBRC 100139 / OT-3).